Consider the following 417-residue polypeptide: UDP-N-acetylglucosamine 1-carboxyvinyltransferase (417 aa).

K22 to N23 lines the phosphoenolpyruvate pocket. R91 lines the UDP-N-acetyl-alpha-D-glucosamine pocket. Catalysis depends on C115, which acts as the Proton donor. The residue at position 115 (C115) is a 2-(S-cysteinyl)pyruvic acid O-phosphothioketal. UDP-N-acetyl-alpha-D-glucosamine is bound by residues R120 to L124, D304, and I326.

This sequence belongs to the EPSP synthase family. MurA subfamily.

Its subcellular location is the cytoplasm. The catalysed reaction is phosphoenolpyruvate + UDP-N-acetyl-alpha-D-glucosamine = UDP-N-acetyl-3-O-(1-carboxyvinyl)-alpha-D-glucosamine + phosphate. The protein operates within cell wall biogenesis; peptidoglycan biosynthesis. Cell wall formation. Adds enolpyruvyl to UDP-N-acetylglucosamine. This is UDP-N-acetylglucosamine 1-carboxyvinyltransferase from Nitratidesulfovibrio vulgaris (strain DSM 19637 / Miyazaki F) (Desulfovibrio vulgaris).